Consider the following 425-residue polypeptide: Serine--tRNA ligase (425 aa).

An L-serine-binding site is contributed by 231–233 (TAE). Residue 262–264 (RSE) participates in ATP binding. Glu-285 contacts L-serine. 349–352 (EISS) is a binding site for ATP. Ser-385 is an L-serine binding site.

The protein belongs to the class-II aminoacyl-tRNA synthetase family. Type-1 seryl-tRNA synthetase subfamily. In terms of assembly, homodimer. The tRNA molecule binds across the dimer.

The protein localises to the cytoplasm. The enzyme catalyses tRNA(Ser) + L-serine + ATP = L-seryl-tRNA(Ser) + AMP + diphosphate + H(+). It carries out the reaction tRNA(Sec) + L-serine + ATP = L-seryl-tRNA(Sec) + AMP + diphosphate + H(+). It participates in aminoacyl-tRNA biosynthesis; selenocysteinyl-tRNA(Sec) biosynthesis; L-seryl-tRNA(Sec) from L-serine and tRNA(Sec): step 1/1. In terms of biological role, catalyzes the attachment of serine to tRNA(Ser). Is also able to aminoacylate tRNA(Sec) with serine, to form the misacylated tRNA L-seryl-tRNA(Sec), which will be further converted into selenocysteinyl-tRNA(Sec). The polypeptide is Serine--tRNA ligase (Bacillus subtilis (strain 168)).